The primary structure comprises 619 residues: DNA mismatch repair protein MutL (619 aa).

This sequence belongs to the DNA mismatch repair MutL/HexB family.

Functionally, this protein is involved in the repair of mismatches in DNA. It is required for dam-dependent methyl-directed DNA mismatch repair. May act as a 'molecular matchmaker', a protein that promotes the formation of a stable complex between two or more DNA-binding proteins in an ATP-dependent manner without itself being part of a final effector complex. The polypeptide is DNA mismatch repair protein MutL (Shewanella frigidimarina (strain NCIMB 400)).